Reading from the N-terminus, the 253-residue chain is Triosephosphate isomerase, cytosolic (253 aa).

Substrate is bound by residues N10 and K12. The Electrophile role is filled by H96. Catalysis depends on E166, which acts as the Proton acceptor.

The protein belongs to the triosephosphate isomerase family. As to quaternary structure, homodimer.

Its subcellular location is the cytoplasm. The catalysed reaction is D-glyceraldehyde 3-phosphate = dihydroxyacetone phosphate. Its pathway is carbohydrate biosynthesis; gluconeogenesis. The protein operates within carbohydrate degradation; glycolysis; D-glyceraldehyde 3-phosphate from glycerone phosphate: step 1/1. The chain is Triosephosphate isomerase, cytosolic from Coptis japonica (Japanese goldthread).